Reading from the N-terminus, the 98-residue chain is NADH-ubiquinone oxidoreductase chain 4L (98 aa).

The next 3 membrane-spanning stretches (helical) occupy residues 1–21 (MMPI…GTLI), 28–48 (STLL…AMLI), and 59–79 (APLI…ALLV).

The protein belongs to the complex I subunit 4L family. In terms of assembly, core subunit of respiratory chain NADH dehydrogenase (Complex I) which is composed of 45 different subunits.

It is found in the mitochondrion inner membrane. It carries out the reaction a ubiquinone + NADH + 5 H(+)(in) = a ubiquinol + NAD(+) + 4 H(+)(out). In terms of biological role, core subunit of the mitochondrial membrane respiratory chain NADH dehydrogenase (Complex I) which catalyzes electron transfer from NADH through the respiratory chain, using ubiquinone as an electron acceptor. Part of the enzyme membrane arm which is embedded in the lipid bilayer and involved in proton translocation. This Petaurus breviceps (Australian sugar glider) protein is NADH-ubiquinone oxidoreductase chain 4L (MT-ND4L).